A 782-amino-acid polypeptide reads, in one-letter code: Coiled-coil alpha-helical rod protein 1 (782 aa).

Composition is skewed to basic and acidic residues over residues glutamate 62–arginine 74 and glutamate 208–leucine 218. 2 disordered regions span residues glutamate 62–glutamate 82 and glutamate 177–leucine 218. Coiled-coil stretches lie at residues leucine 111–histidine 303, leucine 344–serine 437, and valine 498–glycine 691.

Found in all tissues tested, abundantly expressed in heart, liver, skeletal muscle, kidney and pancreas, and to a lesser extent in lung and placenta. Overexpressed in keratinocytes of psoriatic lesions.

The protein localises to the cytoplasm. It is found in the nucleus. May be a regulator of keratinocyte proliferation or differentiation. This Homo sapiens (Human) protein is Coiled-coil alpha-helical rod protein 1 (CCHCR1).